We begin with the raw amino-acid sequence, 671 residues long: MIDFDDVAAINPELLQLLPLHPKDNLPLQENVTIQKQKRRSVNSKIPAPKESLRTRSTRMSTVSELRVTAQENDMEVELPAAANTRKQFSVPPTHPRPSCPAVAEIPSRMVSEEVEEQVHSIRGSSSANPVNSVRRKSCIVKEVEKMKNKREEKKAQNSEMRMKRAQEYDSSFPNWEFARMIKEFRATLECHPLTMTDPIEEHRICVCVRKRPLNKQELAKKEIDVISIPSKCLLLVHEPKLKVDLTKYLENQAFCFDFAFDETASNEVVYRFTARPLVQTIFEGGKATCFAYGQTGSGKTHTMGGDLSGKAQNASKGIYAMASRDVFLLKNQPCYRKLGLEVYVTFFEIYNGKLFDLLNKKAKLRVLEDGKQQVQVVGLQEHLVNSADDVIKMIDMGSACRTSGQTFANSNSSRSHACFQILLRAKGRMHGKFSLVDLAGNERGADTSSADRQTRMEGAEINKSLLALKECIRALGQNKAHTPFRESKLTQVLRDSFIGENSRTCMIATISPGISSCEYTLNTLRYADRVKELSPHSGPSGEQLIQMETEEMEACSNGALIPGNLSKEEEELSSQMSSFNEAMTQIRELEERAVEELKEIIQQGPDWLELSEMTEQPDYDLETFVNKAEFALAQQAKHFSALRDVIKALRLAMQLEEQASRQISSKKRPQ.

The segment at 1–200 is globular; sequence MIDFDDVAAI…CHPLTMTDPI (200 aa). Positions 36 to 62 are disordered; the sequence is KQKRRSVNSKIPAPKESLRTRSTRMST. At Ser-41 the chain carries Phosphoserine; by AURKB. Residues 44-47 carry the Microtubule tip localization signal motif; the sequence is SKIP. 7 positions are modified to phosphoserine: Ser-52, Ser-57, Ser-61, Ser-112, Ser-121, Ser-133, and Ser-138. A negative regulator of microtubule-binding region spans residues 153-184; it reads EKKAQNSEMRMKRAQEYDSSFPNWEFARMIKE. 2 disulfide bridges follow: Cys-191/Cys-233 and Cys-290/Cys-506. Residues 204-534 form the Kinesin motor domain; that stretch reads RICVCVRKRP…LRYADRVKEL (331 aa). Residue 294–301 participates in ATP binding; sequence GQTGSGKT. Phosphoserine is present on residues Ser-465, Ser-567, and Ser-579. Residues 564–604 are a coiled coil; sequence GNLSKEEEELSSQMSSFNEAMTQIRELEERAVEELKEIIQQ.

It belongs to the TRAFAC class myosin-kinesin ATPase superfamily. Kinesin family. MCAK/KIF2 subfamily. As to quaternary structure, interacts with CENPH. Interacts with MTUS2/TIP150; the interaction is direct. Interacts with MAPRE1; the interaction is direct, regulated by phosphorylation and is probably required for targeting to growing microtubule plus ends. Interacts with KIF18B at microtubule tips; this interaction increases the affinity of both partners for microtubule plus ends and is required for robust microtubule depolymerization. Phosphorylation by AURKA or AURKB strongly reduces KIF18B-binding. In terms of processing, phosphorylation by AURKB, regulates association with centromeres and kinetochores and the microtubule depolymerization activity. Ubiquitinated.

The protein resides in the cytoplasm. It is found in the cytoskeleton. The protein localises to the nucleus. Its subcellular location is the chromosome. It localises to the centromere. The protein resides in the kinetochore. In complex with KIF18B, constitutes the major microtubule plus-end depolymerizing activity in mitotic cells. Regulates the turnover of microtubules at the kinetochore and functions in chromosome segregation during mitosis. Plays a role in chromosome congression and is required for the lateral to end-on conversion of the chromosome-microtubule attachment. In Macaca fascicularis (Crab-eating macaque), this protein is Kinesin-like protein KIF2C (KIF2C).